Here is a 192-residue protein sequence, read N- to C-terminus: Ion-translocating oxidoreductase complex subunit B (192 aa).

The segment at 1–26 (MNTIWIAVGALTFLGLVFGAILGYAS) is hydrophobic. The region spanning 32-91 (EDDPVVEKIDAILPQSQCGQCGYPGCRPYAEAVGLQGEKINRCAPGGEAVMLKIADLLNV) is the 4Fe-4S domain. [4Fe-4S] cluster-binding residues include Cys-49, Cys-52, Cys-57, Cys-74, Cys-117, Cys-120, Cys-123, Cys-127, Cys-147, Cys-150, Cys-153, and Cys-157. 4Fe-4S ferredoxin-type domains follow at residues 108–137 (MLAV…GATR) and 138–167 (AMHT…LRPV).

It belongs to the 4Fe4S bacterial-type ferredoxin family. RnfB subfamily. As to quaternary structure, the complex is composed of six subunits: RsxA, RsxB, RsxC, RsxD, RsxE and RsxG. The cofactor is [4Fe-4S] cluster.

Its subcellular location is the cell inner membrane. Functionally, part of a membrane-bound complex that couples electron transfer with translocation of ions across the membrane. Required to maintain the reduced state of SoxR. The polypeptide is Ion-translocating oxidoreductase complex subunit B (Salmonella arizonae (strain ATCC BAA-731 / CDC346-86 / RSK2980)).